The following is a 334-amino-acid chain: Porphobilinogen deaminase (334 aa).

At cysteine 250 the chain carries S-(dipyrrolylmethanemethyl)cysteine.

The protein belongs to the HMBS family. As to quaternary structure, monomer. Dipyrromethane is required as a cofactor.

It catalyses the reaction 4 porphobilinogen + H2O = hydroxymethylbilane + 4 NH4(+). It participates in porphyrin-containing compound metabolism; protoporphyrin-IX biosynthesis; coproporphyrinogen-III from 5-aminolevulinate: step 2/4. Functionally, tetrapolymerization of the monopyrrole PBG into the hydroxymethylbilane pre-uroporphyrinogen in several discrete steps. In Cutibacterium acnes (strain DSM 16379 / KPA171202) (Propionibacterium acnes), this protein is Porphobilinogen deaminase.